The sequence spans 227 residues: NAD(P)H-hydrate epimerase (227 aa).

The 210-residue stretch at 12–221 (SRLVDELAIA…DIGVPRALLE (210 aa)) folds into the YjeF N-terminal domain. 59-63 (NNGGD) lines the (6S)-NADPHX pocket. Residues Asn-60 and Asp-131 each contribute to the K(+) site. Residues 135 to 141 (GTGATGE) and Asp-164 contribute to the (6S)-NADPHX site. Position 167 (Thr-167) interacts with K(+).

Belongs to the NnrE/AIBP family. It depends on K(+) as a cofactor.

The enzyme catalyses (6R)-NADHX = (6S)-NADHX. It catalyses the reaction (6R)-NADPHX = (6S)-NADPHX. Functionally, catalyzes the epimerization of the S- and R-forms of NAD(P)HX, a damaged form of NAD(P)H that is a result of enzymatic or heat-dependent hydration. This is a prerequisite for the S-specific NAD(P)H-hydrate dehydratase to allow the repair of both epimers of NAD(P)HX. In Pirellula staleyi (strain ATCC 27377 / DSM 6068 / ICPB 4128) (Pirella staleyi), this protein is NAD(P)H-hydrate epimerase.